Consider the following 391-residue polypeptide: Phosphoglycerate kinase (391 aa).

Residues 21–23 (DLN), arginine 36, 59–62 (HLGR), arginine 114, and arginine 147 each bind substrate. ATP is bound by residues lysine 198, glutamate 315, and 344–347 (GGDT).

The protein belongs to the phosphoglycerate kinase family. Monomer.

It is found in the cytoplasm. It carries out the reaction (2R)-3-phosphoglycerate + ATP = (2R)-3-phospho-glyceroyl phosphate + ADP. It functions in the pathway carbohydrate degradation; glycolysis; pyruvate from D-glyceraldehyde 3-phosphate: step 2/5. This Actinobacillus pleuropneumoniae serotype 5b (strain L20) protein is Phosphoglycerate kinase.